Reading from the N-terminus, the 494-residue chain is MHPKRRLCWCLPASGAWAFMLTSLIADTTACESEERLFHKLFSRYNQFIRPVENVSDPVTVHFELAITQLTNVDEVNQIMETNLWLRHIWNDYKLRRDPREYDGIEFVRVPADKIWKPDIVLYNNAVGDFQVEGKTKALLRYDGMITWTPPAIFKSSCPMDITFFPFDHQNCSLKFGSWTYDKAKIDLLIIGSKVDMNEFWENSEWEIVDASGYKHDIKYNCCEEIYTDITYSFYIRRLPMFYTINLIIPCLFISFLTVLVFYLPSDCGEKVTLCISVLLSLTVFLLVITETIPSTSLVIPLVGEYLLFTMIFVTLSIVITVFVLNIHYRTPTTHTMPKWVKTVFLSLLPKVLLMQRPLEQEKKNISKKTKKGSAKTSGKSKHSKHKDNKLHKEQRCCHCDKADDLTSTRRSRLSHQSLKWMAEHTEYSPEVKDVINNVQFIAENMKSQNETKEVEDDWKYVAMVIDRVFLWVFIILCVFGTAGLFIQPLIADT.

Positions 1 to 31 (MHPKRRLCWCLPASGAWAFMLTSLIADTTAC) are cleaved as a signal peptide. The Extracellular portion of the chain corresponds to 32–240 (ESEERLFHKL…TYSFYIRRLP (209 aa)). N-linked (GlcNAc...) asparagine glycans are attached at residues Asn-54 and Asn-171. An intrachain disulfide couples Cys-158 to Cys-172. The next 3 helical transmembrane spans lie at 241-265 (MFYT…FYLP), 272-290 (VTLC…LVIT), and 306-327 (YLLF…VLNI). At 328 to 468 (HYRTPTTHTM…WKYVAMVIDR (141 aa)) the chain is on the cytoplasmic side. Residues 364–390 (KNISKKTKKGSAKTSGKSKHSKHKDNK) are disordered. The span at 366 to 390 (ISKKTKKGSAKTSGKSKHSKHKDNK) shows a compositional bias: basic residues. A helical membrane pass occupies residues 469–489 (VFLWVFIILCVFGTAGLFIQP).

This sequence belongs to the ligand-gated ion channel (TC 1.A.9) family. Acetylcholine receptor (TC 1.A.9.1) subfamily. Alpha-6/CHRNA6 sub-subfamily. In terms of assembly, neuronal AChR is composed of two different types of subunits: alpha and non-alpha (beta). CHRNA6/alpha-6 subunit can be combined to CHRNB2/beta-2, CHRNA4/alpha-4 and CHRNB3/beta-3 to give rise to functional receptors. Heteropentamers containing CHRNB3 have an stoichiometry of (CHRNA6:CHRNB2)2:CHRNB3. Interacts with LYPD6.

It is found in the synaptic cell membrane. It catalyses the reaction K(+)(in) = K(+)(out). The enzyme catalyses Na(+)(in) = Na(+)(out). It carries out the reaction Ca(2+)(in) = Ca(2+)(out). Its activity is regulated as follows. Activated by a myriad of ligands such as acetylcholine, cytisine and nicotine. CHRNA6 nAChR activity is inhibited by the antagonists alpha-conotoxin MII and PIA, a small disulfide-constrained peptides from cone snails. Component of neuronal acetylcholine receptors (nAChRs) that function as pentameric, ligand-gated cation channels with high calcium permeability among other activities. nAChRs are excitatory neurotrasnmitter receptors formed by a collection of nAChR subunits known to mediate synaptic transmission in the nervous system and the neuromuscular junction. Each nAchR subunit confers differential attributes to channel properties, including activation, deactivation and desensitization kinetics, pH sensitivity, cation permeability, and binding to allosteric modulators. CHRNA6 forms pentameric channels with CHRNB2 and CHRNA4 that exhibit high sensitivity to ACh and nicotine and are predominantly expressed in only a few brain areas, including dopaminergic neurons, norepirephrine neurons and cells of the visual system. nAChrs containing CHRNA6 subunits mediate endogenous cholinergic modulation of dopamine and gamma-aminobutyric acid (GABA) release in response to nicotine at nerve terminals. Functionally, component of neuronal acetylcholine receptors (nAChRs) that function as pentameric, ligand-gated cation channels with high calcium permeability among other activities. nAChRs are excitatory neurotrasnmitter receptors formed by a collection of nAChR subunits known to mediate synaptic transmission in the nervous system and the neuromuscular junction. Each nAchR subunit confers differential attributes to channel properties, including activation, deactivation and desensitization kinetics, pH sensitivity, cation permeability, and binding to allosteric modulators. CHRNA6 forms pentameric channels with CHRNB2, CHRNB3 and CHRNA4 that exhibit high sensitivity to ACh and nicotine and are predominantly expressed in only a few brain areas, including dopaminergic neurons, norepirephrine neurons and cells of the visual system. nAChrs containing CHRNA6 subunits mediate endogenous cholinergic modulation of dopamine and gamma-aminobutyric acid (GABA) release in response to nicotine at nerve terminals. This chain is Neuronal acetylcholine receptor subunit alpha-6 (CHRNA6), found in Gallus gallus (Chicken).